The chain runs to 535 residues: Flavonoid 3'-monooxygenase CYP75B4 (535 aa).

The helical transmembrane segment at 8–28 (ISTSLLLTTVALSVIVCYALV) threads the bilayer. C469 contributes to the heme binding site.

The protein belongs to the cytochrome P450 family. Heme is required as a cofactor.

The protein resides in the membrane. It carries out the reaction a 3'-unsubstituted flavone + reduced [NADPH--hemoprotein reductase] + O2 = a 3'-hydroxyflavone + oxidized [NADPH--hemoprotein reductase] + H2O + H(+). The protein operates within secondary metabolite biosynthesis; flavonoid biosynthesis. Catalyzes the 3'-hydroxylation of the flavonoid B-ring to the 3',4'-hydroxylated state. Catalyzes in vitro 3'-hydroxylation of different flavonoids. Catalyzes the conversion of apigenin to luteolin, naringenin to eriodictyol, and kaempferol to quercetin. Possesses specific 5'-hydroxylase activity toward chrysoeriol (a 3'-methoxylated flavone) and is indispensable for tricin formation. Converts chrysoeriol to selgin, a precursor of tricin, suggesting that chrysoeriol, instead of tricetin, is an intermediate in tricin biosynthesis. This chain is Flavonoid 3'-monooxygenase CYP75B4, found in Oryza sativa subsp. japonica (Rice).